The chain runs to 269 residues: Signal recognition particle receptor subunit beta (269 aa).

Residues 35–55 (LLSVAVAVLAVLLTLVFWKFI) traverse the membrane as a helical segment. GTP-binding positions include 69 to 77 (GLCDSGKTL) and 90 to 93 (TQTS). Ser-110 is subject to Phosphoserine. Gly-118 is a GTP binding site. Thr-212 is subject to Phosphothreonine. Ala-246 provides a ligand contact to GTP.

The protein belongs to the SRP receptor beta subunit family. Heterodimer with SRPRA.

It is found in the endoplasmic reticulum membrane. Component of the signal recognition particle (SRP) complex receptor (SR). Ensures, in conjunction with the SRP complex, the correct targeting of the nascent secretory proteins to the endoplasmic reticulum membrane system. May mediate the membrane association of SR. This chain is Signal recognition particle receptor subunit beta (Srprb), found in Rattus norvegicus (Rat).